The following is a 1035-amino-acid chain: NACHT, LRR and PYD domains-containing protein 3 (1035 aa).

A Pyrin domain is found at 1–93; that stretch reads MKMASTRCKL…YEKAKRDEPK (93 aa). At Ser-5 the chain carries Phosphoserine. Cys-8 and Cys-108 are disulfide-bonded. The residue at position 13 (Tyr-13) is a Phosphotyrosine. Cys-130 is lipidated: S-palmitoyl cysteine. A required for binding to phosphatidylinositol 4-phosphate (PtdIns4P) region spans residues 131–134; that stretch reads KKKK. 3 positions are modified to phosphotyrosine: Tyr-136, Tyr-140, and Tyr-143. The FISNA domain maps to 140–210; the sequence is YRKYVRSRFQ…SPIKMELLFD (71 aa). Phosphoserine is present on residues Ser-161 and Ser-163. Tyr-168 carries the phosphotyrosine modification. Residue Thr-169 participates in ATP binding. Ser-198 and Ser-201 each carry phosphoserine. One can recognise an NACHT domain in the interval 220-536; it reads HTVVFQGAAG…EFFAAMYYLL (317 aa). An ATP-binding site is contributed by 226–233; it reads GAAGIGKT. Ser-265 and Ser-295 each carry phosphoserine. Lys-324 is covalently cross-linked (Glycyl lysine isopeptide (Lys-Gly) (interchain with G-Cter in ubiquitin)). Phosphoserine is present on Ser-334. The KFERQ-like motif 1 signature appears at 355–359; the sequence is LEKLQ. Lys-430 is covalently cross-linked (Glycyl lysine isopeptide (Lys-Gly) (interchain with G-Cter in ubiquitin)). His-522 contributes to the ATP binding site. The KFERQ-like motif 2 signature appears at 603–607; it reads QIRLE. Residue Lys-689 forms a Glycyl lysine isopeptide (Lys-Gly) (interchain with G-Cter in ubiquitin) linkage. Phosphoserine occurs at positions 727 and 734. LRR repeat units follow at residues 741 to 761, 770 to 791, 798 to 818, 827 to 848, and 855 to 875; these read SLTE…RVLC, NIRR…DISL, KLVE…RLLC, NLKK…DLAS, and SLTR…AILC. The KFERQ-like motif 3 motif lies at 797-801; the sequence is QKLVE. Ser-805 carries the post-translational modification Phosphoserine. 3 S-palmitoyl cysteine lipidation sites follow: Cys-836, Cys-837, and Cys-843. Tyr-860 carries the post-translational modification Phosphotyrosine. Residue Lys-877 forms a Glycyl lysine isopeptide (Lys-Gly) (interchain with G-Cter in ubiquitin) linkage. LRR repeat units follow at residues 884-905, 912-932, 941-962, and 969-990; these read NLQK…ALSS, NLTH…KLLC, KLQV…DLST, and SLRK…MFCE. Lys-926 is covalently cross-linked (Glycyl lysine isopeptide (Lys-Gly) (interchain with G-Cter in ubiquitin)). Cys-957 carries the S-palmitoyl cysteine lipid modification. A Glycyl lysine isopeptide (Lys-Gly) (interchain with G-Cter in ubiquitin) cross-link involves residue Lys-972. The residue at position 974 (Ser-974) is a Phosphoserine. A KFERQ-like motif 4 motif is present at residues 990–994; the sequence is EVLKQ. Ser-1034 carries the post-translational modification Phosphoserine.

Belongs to the NLRP family. In terms of assembly, sensor component of NLRP3 inflammasomes; inflammasomes are supramolecular complexes that assemble in the cytosol in response to pathogens and other damage-associated signals and play critical roles in innate immunity and inflammation. The core of NLRP3 inflammasomes consists of a signal sensor component (NLRP3), an adapter (PYCARD/ASC), which recruits an effector pro-inflammatory caspase (CASP1 and, possibly, CASP4 and CASP5). Homodecamer; inactive NLRP3 forms homodecameric double-ring cages that hide pyrin domains within NACHT-LRR rings to avoid premature activation. Interacts (via pyrin domain) with PYCARD/ASC (via pyrin domain); interaction is direct. Interacts (via LRR repeat domain) with NEK7 (via N-terminus); the interaction is required for the formation of the complex NLRP3:PYCARD, oligomerization of PYCARD/ASC and activation of CASP1. Interacts (via LRR repeat domain) with NR4A1/Nur77 (via N-terminus); the interaction is direct, requires activation of NR4A1 by its ligands NBRE-containing dsDNA and lipopolysaccharide, and stimulates the association of NLRP3 with NEK7 for non-canonical NLRP3 inflammasome activation. Interacts with CARD8; leading to inhibit formation of the NLRP3 inflammasome. Interacts with MEFV; this interaction targets NLRP3 to degradation by autophagy, hence preventing excessive IL1B- and IL18-mediated inflammation. Interacts with EIF2AK2/PKR; this interaction requires EIF2AK2 activity, is accompanied by EIF2AK2 autophosphorylation and promotes inflammasome assembly in response to specific stimuli. Interacts with GBP5 (via DAPIN domain); this interaction promotes inflammasome assembly in response to microbial and soluble, but not crystalline, agents. Interacts with PML (isoform PML-1) (via the leucine-rich repeat (LRR) domain); PML-mediated increase in NLRP3 inflammasome activation does not depend upon this interaction. Interacts (via NACHT domain) with DHX33 (via DEAH box); NLRP3 activation in presence of cytosolic dsRNA is mediated by DHX33. Interacts (via NACHT and LRR domains) with ARRB2; this interaction is direct and inducible by polyunsaturated fatty acids (PUFAs). Interacts (via NACHT domain) with DDX3X under both LPS-primed and inflammasome-activating conditions. Interacts with IRF4 (via the LRR domain); this interaction is direct and is required for optimal IRF4 binding to IL4 promoter and efficient IL4 transactivation during differentiation of Th2 helper T-cells. Interacts with MAVS; promoting localization to mitochondria and activation of the NLRP3 inflammasome. Interacts with MARK4; promoting localization of NLRP3 to the microtubule organizing center (MTOC). Interacts with TRIM50; this interaction also promotes NLRP3 oligomerization and subsequent inflammasome activation. Interacts with IRGM; preventing NLRP3 inflammasome assembly and promoting NLRP3 degradation. Interacts (via KFERQ-like motifs) with HSPA8/HSC70; promoting NLRP3 degradation by the chaperone-mediated autophagy pathway. Interacts (via NACHT and LLR domains) with ABHD8; this interaction is enhanced in the presence of NLRP3 inflammasome inducers, such as ATP, nigericin, silica, or alum. Interaction with ABHD8 leads the recruitment of ZDHHC12, hence facilitating NLRP3 palmitoylation and degradation by the chaperone-mediated autophagy pathway (CMA), therefore attenuating NLRP3 inflammasome activation. In terms of processing, the disulfide bond in the pyrin domain might play a role in reactive oxygen species-mediated activation. Post-translationally, phosphorylation at Ser-198 by MAPK8/JNK1 increases inflammasome activation by promoting deubiquitination by BRCC3 and NLRP3 homooligomerization. Phosphorylation at Ser-805 by CSNK1A1 prevents inflammasome activation by preventing NEK7 recruitment. Phosphorylation at Ser-5 in the pyrin domain inhibits homomultimerization of NLRP3 and activation of the NLRP3 inflammasome: dephosphorylation by protein phosphatase 2A (PP2A) promotes assembly of the NLRP3 inflammasome. Phosphorylation at Ser-295 by PKD/PRKD1 promotes NLRP3 inflammasome assembly. Phosphorylation by ERK1/MAPK3 promotes NLRP3 inflammasome assembly. Phosphorylation by BTK (at Tyr-136, Tyr-140, Tyr-143 and Tyr-168) in the region that mediates binding to phosphatidylinositol phosphate, promotes relocalization of NLRP3 and assembly of the NLRP3 inflammasome. Phosphorylation at Tyr-860 inhibits NLRP3 inflammasome assembly: dephosphorylation by PTPN22 promotes inflammasome activation. Phosphorylated by LATS1 and LATS2 at Ser-265 following palmitoylation by ZDHHC1, promoting its relocalization to the microtubule organizing center (MTOC), where NLRP3 is activated by NEK7, leading to inflammasome assembly and activation. Ubiquitinated; undergoes both 'Lys-48'- and 'Lys-63'-linked polyubiquitination. Ubiquitination does not lead to degradation, but inhibits inflammasome activation. Deubiquitination is catalyzed by BRCC3 and associated with NLRP3 activation and inflammasome assembly. This process can be induced by the activation of Toll-like receptors (by LPS), through a non-transcriptional pathway dependent on the mitochondrial production of reactive oxygen species, and by ATP. Ubiquitinated by TRIM31 via 'Lys-48'-linked ubiquitination, leading to its degradation by the proteasome. Ubiquitinated at Lys-689 by the SCF(FBXL2) complex, leading to its degradation by the proteasome. Ubiquitinated by TRIM35 via 'lys-48' and 'Lys-63'-linked ubiquitination leading to inhibition of NLRP3 inflammasome activation. Undergoes 'Lys-27'-linked polyubiquitination by MARCHF5, leading to NLRP3-NEK7 complex formation and NLRP3 oligomerization. In terms of processing, palmitoylation by ZDHHC12 promotes NLRP3 degradation by the chaperone-mediated autophagy pathway (CMA) and therefore limits NLRP3 inflammasome activation. Interaction with ZDHHC12, and hence NLRP3 palmitoylation, is greatly enhanced by ABHD8. Following palmitoylation, HSPA8/HSC70 recognizes and binds the KFERQ-like motifs on NLRP3 and promotes NLRP3 recruitment to lysosomes, where it is degraded via the chaperone-mediated autophagy pathway in a LAMP2-dependent process. Palmitoylation at Cys-836 and Cys-837 by ZDHHC5 enhances its binding to NEK7 leading to inflammasome assembly and activation. Palmitoylation at Cys-130 and Cys-957 by ZDHHC1 facilitates phosphorylation at Ser-265 by LATS1 and LATS2, promoting its relocalization to the microtubule organizing center (MTOC), where NLRP3 is activated by NEK7, leading to inflammasome assembly and activation. Depalmitoylated by ABHD17A. Post-translationally, degraded via selective autophagy following interaction with IRGM. IRGM promotes NLRP3 recruitment to autophagosome membranes, promoting its SQSTM1/p62-dependent autophagy-dependent degradation. Highly expressed in oocyte, testis, spleen, thymus and kidney.

It is found in the cytoplasm. It localises to the cytosol. The protein resides in the inflammasome. The protein localises to the cytoskeleton. Its subcellular location is the microtubule organizing center. It is found in the golgi apparatus membrane. It localises to the endoplasmic reticulum. The protein resides in the mitochondrion. The protein localises to the secreted. Its subcellular location is the nucleus. The enzyme catalyses ATP + H2O = ADP + phosphate + H(+). Under resting conditions, NLRP3 binds ADP and is autoinhibited. Inactive NLRP3 forms homodecameric double-ring cages that hide pyrin domains within NACHT-LRR rings to avoid premature activation. NLRP3 activation stimuli include extracellular ATP, nigericin, reactive oxygen species, crystals of monosodium urate or cholesterol, amyloid-beta fibers, environmental or industrial particles and nanoparticles, such as asbestos, silica, aluminum salts, cytosolic dsRNA, etc. Almost all stimuli trigger intracellular K(+) efflux. These stimuli lead to membrane perturbations that induce activation of NLRP3. Upon activation, NLRP3 is transported to microtubule organizing center (MTOC), where it is unlocked by NEK7, leading to its relocalization to dispersed trans-Golgi network (dTGN) vesicle membranes and recruitment of PYCARD/ASC for the formation of an active inflammasome complex. NEK7-activated NLRP3 forms a disk-shaped inflammasome. NLRP3 and PYCARD/ASC interact via their respective pyrin domains; interaction initiates speck formation (nucleation) which greatly enhances further addition of soluble PYCARD/ASC molecules to the speck in a prion-like polymerization process. Clustered PYCARD/ASC nucleates the formation of CASP1 filaments through the interaction of their respective CARD domains, acting as a platform for CASP1 polymerization and activation. Active CASP1 then processes IL1B and IL18 precursors, leading to the release of mature cytokines in the extracellular milieu and inflammatory response. NLRP3 inflammasome assembly is inhibited by IRGM, which impedes NLRP3 oligomerization. NLRP3 inflammasome is inhibited by cyclic AMP (cAMP), which directly binds NLRP3; inhibition is relieved by calcium-sensing receptor CASR, which inhibits production of cAMP. Specifically inhibited by sulfonylurea MCC950 (also named CP-456,773, CRID3), a potent and specific small-molecule inhibitor of the NLRP3 inflammasome that acts by preventing ATP hydrolysis. In terms of biological role, sensor component of the NLRP3 inflammasome, which mediates inflammasome activation in response to defects in membrane integrity, leading to secretion of inflammatory cytokines IL1B and IL18 and pyroptosis. In response to pathogens and other damage-associated signals that affect the integrity of membranes, initiates the formation of the inflammasome polymeric complex composed of NLRP3, CASP1 and PYCARD/ASC. Recruitment of pro-caspase-1 (proCASP1) to the NLRP3 inflammasome promotes caspase-1 (CASP1) activation, which subsequently cleaves and activates inflammatory cytokines IL1B and IL18 and gasdermin-D (GSDMD), promoting cytokine secretion and pyroptosis. Activation of NLRP3 inflammasome is also required for HMGB1 secretion; stimulating inflammatory responses. Under resting conditions, ADP-bound NLRP3 is autoinhibited. NLRP3 activation stimuli include extracellular ATP, nigericin, reactive oxygen species, crystals of monosodium urate or cholesterol, amyloid-beta fibers, environmental or industrial particles and nanoparticles, such as asbestos, silica, aluminum salts, cytosolic dsRNA, etc. Almost all stimuli trigger intracellular K(+) efflux. These stimuli lead to membrane perturbation and activation of NLRP3. Upon activation, NLRP3 is transported to microtubule organizing center (MTOC), where it is unlocked by NEK7, leading to its relocalization to dispersed trans-Golgi network (dTGN) vesicle membranes and formation of an active inflammasome complex. Associates with dTGN vesicle membranes by binding to phosphatidylinositol 4-phosphate (PtdIns4P). Shows ATPase activity. Independently of inflammasome activation, regulates the differentiation of T helper 2 (Th2) cells and has a role in Th2 cell-dependent asthma and tumor growth. During Th2 differentiation, required for optimal IRF4 binding to IL4 promoter and for IRF4-dependent IL4 transcription. Binds to the consensus DNA sequence 5'-GRRGGNRGAG-3'. May also participate in the transcription of IL5, IL13, GATA3, CCR3, CCR4 and MAF. In Macaca mulatta (Rhesus macaque), this protein is NACHT, LRR and PYD domains-containing protein 3 (NLRP3).